A 563-amino-acid chain; its full sequence is Benzaldehyde lyase (563 aa).

Belongs to the TPP enzyme family. A metal cation is required as a cofactor. Requires thiamine diphosphate as cofactor.

It catalyses the reaction benzoin = 2 benzaldehyde. Functionally, cleavage of benzoin-anisoin acyloin linkage. The chain is Benzaldehyde lyase (bznB) from Pseudomonas fluorescens.